The sequence spans 1440 residues: Glucose transporter type 1 (1440 aa).

A signal peptide spans methionine 1 to glycine 23. Topologically, residues methionine 24–serine 67 are cytoplasmic. Residues valine 68–alanine 88 traverse the membrane as a helical segment. At asparagine 89–glycine 95 the chain is on the extracellular side. A helical membrane pass occupies residues glycine 96–valine 116. Residues serine 117–arginine 127 are Cytoplasmic-facing. A helical transmembrane segment spans residues phenylalanine 128 to isoleucine 148. Topologically, residues alanine 149–glutamine 162 are extracellular. Position 162 (glutamine 162) interacts with D-glucose. Residues leucine 163 to threonine 183 form a helical membrane-spanning segment. Topologically, residues asparagine 184–glycine 186 are cytoplasmic. A helical transmembrane segment spans residues tryptophan 187–valine 207. Over cysteine 208 to proline 272 the chain is Extracellular. Residues leucine 273–tyrosine 293 form a helical membrane-spanning segment. D-glucose contacts are provided by residues glutamine 283 to glutamine 284 and asparagine 289. At tyrosine 294–lysine 310 the chain is on the cytoplasmic side. Residues phenylalanine 311–methionine 331 form a helical membrane-spanning segment. Residues aspartate 332–leucine 339 lie on the Extracellular side of the membrane. Residues histidine 340–isoleucine 360 form a helical membrane-spanning segment. Residues lysine 361 to valine 372 are Cytoplasmic-facing. A helical transmembrane segment spans residues valine 373–isoleucine 393. Tryptophan 391 lines the D-glucose pocket. Residues threonine 394–serine 405 lie on the Extracellular side of the membrane. Residues alanine 406 to proline 426 form a helical membrane-spanning segment. Over serine 427 to lysine 429 the chain is Cytoplasmic. Residues threonine 430–phenylalanine 450 traverse the membrane as a helical segment. At threonine 451–asparagine 534 the chain is on the extracellular side. Asparagine 460 and asparagine 480 each carry an N-linked (GlcNAc...) asparagine glycan. The chain crosses the membrane as a helical span at residues leucine 535–glycine 555. Residues serine 556–lysine 1440 are Cytoplasmic-facing. Disordered stretches follow at residues glutamate 628 to alanine 708, glutamine 725 to methionine 808, alanine 966 to proline 987, phenylalanine 1000 to histidine 1083, leucine 1304 to histidine 1330, and alanine 1380 to valine 1401. Positions proline 669–threonine 678 are enriched in polar residues. Residues glutamine 686–glutamine 704 show a composition bias toward low complexity. Positions glutamine 730 to proline 739 are enriched in pro residues. Residues cysteine 754 to arginine 789 are compositionally biased toward basic residues. A compositionally biased stretch (low complexity) spans serine 1313–histidine 1330.

This sequence belongs to the major facilitator superfamily. Sugar transporter (TC 2.A.1.1) family. Glucose transporter subfamily.

Its subcellular location is the membrane. In terms of biological role, facilitative glucose transporter. This chain is Glucose transporter type 1 (Glut1), found in Drosophila melanogaster (Fruit fly).